A 212-amino-acid polypeptide reads, in one-letter code: Large ribosomal subunit protein uL3 (212 aa).

The interval 147–166 (GSTGQNQSPGKVFKGKKMPG) is disordered. Position 153 is an N5-methylglutamine (glutamine 153).

This sequence belongs to the universal ribosomal protein uL3 family. In terms of assembly, part of the 50S ribosomal subunit. Forms a cluster with proteins L14 and L19. In terms of processing, methylated by PrmB.

Functionally, one of the primary rRNA binding proteins, it binds directly near the 3'-end of the 23S rRNA, where it nucleates assembly of the 50S subunit. The polypeptide is Large ribosomal subunit protein uL3 (Psychrobacter sp. (strain PRwf-1)).